The chain runs to 488 residues: Erythromycin resistance ATP-binding protein MsrA (488 aa).

The region spanning 6-199 (IKFNQINHKL…NQYEQEQLEQ (194 aa)) is the ABC transporter 1 domain. 38–45 (GGNGTGKT) provides a ligand contact to ATP. Residues 200–298 (QRKYEQYISE…KIYDIHNNYP (99 aa)) form a Q-linker, rich in Glu and hydrophilic AA region. The interval 211 to 255 (QRLSQASKAKRNQAQQMAQASSKQKNKSIAPDRLSASKEKGTVEK) is disordered. The span at 222–233 (NQAQQMAQASSK) shows a compositional bias: low complexity. Residues 245–255 (SASKEKGTVEK) are compositionally biased toward basic and acidic residues. The ABC transporter 2 domain occupies 299 to 487 (IIAQNLTLVK…ELTGQSIHDI (189 aa)). 331–338 (GANGVGKT) provides a ligand contact to ATP.

The protein belongs to the ABC transporter superfamily.

Functionally, confers resistance to 14-membered ring macrolides (like erythromycin) and to B streptogramins, by acting as an ATP-dependent efflux pump. In Staphylococcus epidermidis, this protein is Erythromycin resistance ATP-binding protein MsrA (msrA).